The following is a 184-amino-acid chain: Ribosome maturation factor RimP (184 aa).

The protein belongs to the RimP family.

Its subcellular location is the cytoplasm. Its function is as follows. Required for maturation of 30S ribosomal subunits. This is Ribosome maturation factor RimP from Corynebacterium diphtheriae (strain ATCC 700971 / NCTC 13129 / Biotype gravis).